Reading from the N-terminus, the 215-residue chain is MKPFTQHTGLVCPLDRVNVDTDQIIPKQFLKSIKRTGFGPNLFDEWRYLDAGQPGQDNSKRPINSDFVLNFPRYRGASVLLARDNFGCGSSREHAAWALDEYGFRTVIAPSFADIFFNNSFKNGLLPLVLNKVEVDALFAQCQVTEGYTLTVDLAAQQVITQDGTTYAFQIDTFRKHCLLNGLDDIGLTLQHAEAIRVFEAAHRIRQPWLFAPLH.

Belongs to the LeuD family. LeuD type 1 subfamily. In terms of assembly, heterodimer of LeuC and LeuD.

It carries out the reaction (2R,3S)-3-isopropylmalate = (2S)-2-isopropylmalate. Its pathway is amino-acid biosynthesis; L-leucine biosynthesis; L-leucine from 3-methyl-2-oxobutanoate: step 2/4. Catalyzes the isomerization between 2-isopropylmalate and 3-isopropylmalate, via the formation of 2-isopropylmaleate. In Xylella fastidiosa (strain 9a5c), this protein is 3-isopropylmalate dehydratase small subunit.